We begin with the raw amino-acid sequence, 120 residues long: uncharacterized protein (120 aa).

To the N-terminal region of phage HK97/HK620 Gp37/hpaH.

This is an uncharacterized protein from Escherichia coli (strain K12).